The sequence spans 360 residues: Ribosomal RNA large subunit methyltransferase M (360 aa).

S-adenosyl-L-methionine contacts are provided by residues serine 192, 225-228, aspartate 244, aspartate 264, and aspartate 280; that span reads APGG. Lysine 309 functions as the Proton acceptor in the catalytic mechanism.

Belongs to the class I-like SAM-binding methyltransferase superfamily. RNA methyltransferase RlmE family. RlmM subfamily. As to quaternary structure, monomer.

It localises to the cytoplasm. It carries out the reaction cytidine(2498) in 23S rRNA + S-adenosyl-L-methionine = 2'-O-methylcytidine(2498) in 23S rRNA + S-adenosyl-L-homocysteine + H(+). In terms of biological role, catalyzes the 2'-O-methylation at nucleotide C2498 in 23S rRNA. The chain is Ribosomal RNA large subunit methyltransferase M from Alkalilimnicola ehrlichii (strain ATCC BAA-1101 / DSM 17681 / MLHE-1).